The following is a 777-amino-acid chain: Histone-lysine N-methyltransferase set9 (777 aa).

One can recognise an SET domain in the interval 117 to 231 (CPFEVNATNR…VGEEITVTYS (115 aa)). 2 disordered regions span residues 263 to 414 (AVQK…ILSP) and 682 to 718 (RMGS…QGQY). A compositionally biased stretch (polar residues) spans 291-301 (TALQASRTPSV). Positions 323-337 (TSTTDSAAQGAGADG) are enriched in low complexity. Polar residues-rich tracts occupy residues 371 to 405 (TAPS…QGSE) and 688 to 698 (KQGSSAPSTKG).

This sequence belongs to the class V-like SAM-binding methyltransferase superfamily. Histone-lysine methyltransferase family. Suvar4-20 subfamily.

It is found in the nucleus. Its subcellular location is the chromosome. The catalysed reaction is L-lysyl(20)-[histone H4] + 3 S-adenosyl-L-methionine = N(6),N(6),N(6)-trimethyl-L-lysyl(20)-[histone H4] + 3 S-adenosyl-L-homocysteine + 3 H(+). Histone methyltransferase that trimethylates 'Lys-20' of histone H4 to form H4K20me3. This is Histone-lysine N-methyltransferase set9 (hlm-1) from Neurospora crassa (strain ATCC 24698 / 74-OR23-1A / CBS 708.71 / DSM 1257 / FGSC 987).